A 523-amino-acid polypeptide reads, in one-letter code: Signal peptide peptidase-like 3 (523 aa).

An N-terminal signal peptide occupies residues 1–35 (MAFPAPSSSSPRRRGRGLAYLLVSVLLLASRVPGA). Over 36-207 (AGADSEFEDG…EKPSFDGAIP (172 aa)) the chain is Lumenal. The region spanning 110–182 (SAPLASSIAV…SQSAGRKILS (73 aa)) is the PA domain. A glycan (N-linked (GlcNAc...) asparagine) is linked at N159. The helical transmembrane segment at 208–228 (FLWLMAVGSVACASVWSFVVV) threads the bilayer. Residues 229–254 (GDEDKNAPTLGGEEAADSEIVELQTK) lie on the Cytoplasmic side of the membrane. Residues 255–272 (TALVFIVTASLVLLFLFF) traverse the membrane as a helical segment. Topologically, residues 273–275 (FKS) are lumenal. Residues 276–298 (TWSAWLLVVLFCLSGLQGLHYVA) traverse the membrane as a helical segment. Topologically, residues 299-321 (STLIVRTCDRCREAKVALPVLGN) are cytoplasmic. The helical transmembrane segment at 322–342 (VTVVTLVILPLALIFVVVWAV) threads the bilayer. The Lumenal portion of the chain corresponds to 343–347 (HQNSP). A helical membrane pass occupies residues 348 to 368 (FAWVGQDLMGICMMILVLQVV). At 369-377 (HLPNIKVAT) the chain is on the cytoplasmic side. The chain crosses the membrane as a helical span at residues 378 to 398 (ALLVSAFMYDIFWVFISPFIF). D387 is a catalytic residue. Topologically, residues 399 to 430 (KKSVMITVARGSDEGPSLPMVLKMPKEFDTWN) are lumenal. Residues 431-451 (GYDMIGFGDILFPGLLVAFSF) form a helical membrane-spanning segment. D439 is a catalytic residue. Residues 452–465 (RYDRANGKDLTDGY) are Cytoplasmic-facing. The chain crosses the membrane as a helical span at residues 466–486 (FLCLMIGYAFGLSCTYVGLYL). Over 487 to 489 (MKS) the chain is Lumenal. The chain crosses the membrane as a helical span at residues 490–510 (GQPALLYLVPSTLGTIVTLGA). The PAL motif lies at 492–494 (PAL). The Cytoplasmic segment spans residues 511-523 (KRGELSQLWNAKV).

It belongs to the peptidase A22B family. Post-translationally, glycosylated.

The protein localises to the endosome membrane. In terms of biological role, intramembrane-cleaving aspartic protease (I-CLiP) that cleaves type II membrane signal peptides in the hydrophobic plane of the membrane. This Oryza sativa subsp. japonica (Rice) protein is Signal peptide peptidase-like 3 (SPPL3).